Reading from the N-terminus, the 122-residue chain is MKPFHTALSFLILTTALGIWAQITHATETKEVQSSLKAQQGLEIEMFHMGFQDSSDCCLSYNSRIQCSRFIGYFPTSGGCTRPGIIFISKRGFQVCANPSDRRVQRCIERLEQNSQPRTYKQ.

The N-terminal stretch at methionine 1 to alanine 21 is a signal peptide. 3 cysteine pairs are disulfide-bonded: cysteine 57–cysteine 80, cysteine 58–cysteine 96, and cysteine 67–cysteine 107.

This sequence belongs to the intercrine beta (chemokine CC) family. Post-translationally, the N-terminal is proteolytically cleaved by proteases associated with inflammatory responses. The processed forms CCL9(29-101), CCL9(30-101) and CCL9(31-101) exhibit increase in CCR1-mediated signaling and chemotaxis assays in vitro. In terms of tissue distribution, expressed mainly in the liver, lung, and the thymus, although some expression has been detected in a wide variety of tissues except brain.

Its subcellular location is the secreted. Monokine with inflammatory, pyrogenic and chemokinetic properties. Circulates at high concentrations in the blood of healthy animals. Binding to a high-affinity receptor activates calcium release in neutrophils. It also inhibits colony formation of bone marrow myeloid immature progenitors. The chain is C-C motif chemokine 9 (Ccl9) from Mus musculus (Mouse).